The chain runs to 61 residues: Alpha-conotoxin-like Tx1.2 (61 aa).

The signal sequence occupies residues 1–20 (MFTVFLLVVLATTVVSFTSG). A propeptide spanning residues 21-42 (RSTFRGRNAAAKASGLVSLTDR) is cleaved from the precursor. Residues Pro-44 and Pro-50 each carry the 4-hydroxyproline modification. Cystine bridges form between Cys-46-Cys-52 and Cys-47-Cys-60. Residues 48–50 (SHP) are ser-Xaa-Pro motif, crucial for potent interaction with nAChR.

The protein belongs to the conotoxin A superfamily. Expressed by the venom duct.

The protein resides in the secreted. Its function is as follows. Alpha-conotoxins act on postsynaptic membranes, they bind to the nicotinic acetylcholine receptors (nAChR) and thus inhibit them. This toxin also inhibits high voltage-activated (HVA) calcium channel currents in rat DRG neurons (8% inhibition at 1 uM toxin) probably by activating GABA(B) receptors (GABBR1 and/or GABBR2). This Conus textile (Cloth-of-gold cone) protein is Alpha-conotoxin-like Tx1.2.